Here is a 575-residue protein sequence, read N- to C-terminus: Sorting nexin-41 (575 aa).

Residues 30–66 (TDGPDDYDFTEPSINGSSDENAQSNAVAEPIEETDEP) form a disordered region. The span at 41-55 (PSINGSSDENAQSNA) shows a compositional bias: polar residues. The 121-residue stretch at 101–221 (QGKNPEVIRI…QKFLNPEYFW (121 aa)) folds into the PX domain. The a 1,2-diacyl-sn-glycero-3-phospho-(1D-myo-inositol-3-phosphate) site is built by Arg139, Ser141, Lys165, and Arg188. The disordered stretch occupies residues 467–486 (FRSSASPNNKSGSDSISSEV). Polar residues predominate over residues 469-484 (SSASPNNKSGSDSISS).

The protein belongs to the sorting nexin family.

It is found in the endosome membrane. The protein resides in the endomembrane system. Functionally, may be required for cytoplasm to vacuole transport (Cvt) and pexophagy. This is Sorting nexin-41 (SNX41) from Kluyveromyces lactis (strain ATCC 8585 / CBS 2359 / DSM 70799 / NBRC 1267 / NRRL Y-1140 / WM37) (Yeast).